A 794-amino-acid chain; its full sequence is ATP-dependent RNA helicase SUPV3L1, mitochondrial (794 aa).

The N-terminal 30 residues, 1–30 (MRRCAWPLLRLSSRVGLALRHGGAVRLRQA), are a transit peptide targeting the mitochondrion. The Helicase ATP-binding domain maps to 182 to 322 (EARAIQRKII…AIDLVTELMY (141 aa)). 195-202 (GPTNSGKT) provides a ligand contact to ATP. The Helicase C-terminal domain occupies 341-506 (VLDYALESLD…GLHPTPEQIE (166 aa)). Disordered stretches follow at residues 678-741 (EVMS…HGRG) and 764-794 (EWQD…KKKK). Residues 689 to 704 (TKRDARTVSDHRDAKS) show a composition bias toward basic and acidic residues.

Belongs to the helicase family. Mg(2+) is required as a cofactor. Mn(2+) serves as cofactor.

The protein resides in the nucleus. Its subcellular location is the mitochondrion matrix. It is found in the mitochondrion nucleoid. It carries out the reaction ATP + H2O = ADP + phosphate + H(+). Functionally, major helicase player in mitochondrial RNA metabolism. Component of the mitochondrial degradosome (mtEXO) complex, that degrades 3' overhang double-stranded RNA with a 3'-to-5' directionality in an ATP-dependent manner. ATPase and ATP-dependent multisubstrate helicase, able to unwind double-stranded (ds) DNA and RNA, and RNA/DNA heteroduplexes in the 5'-to-3' direction. Plays a role in the RNA surveillance system in mitochondria; regulates the stability of mature mRNAs, the removal of aberrantly formed mRNAs and the rapid degradation of non coding processing intermediates. Also implicated in recombination and chromatin maintenance pathways. May protect cells from apoptosis. Associates with mitochondrial DNA. This is ATP-dependent RNA helicase SUPV3L1, mitochondrial (SUPV3L1) from Gallus gallus (Chicken).